A 469-amino-acid polypeptide reads, in one-letter code: ATP synthase subunit beta (469 aa).

Position 157–164 (157–164) interacts with ATP; the sequence is GGAGVGKT.

This sequence belongs to the ATPase alpha/beta chains family. F-type ATPases have 2 components, CF(1) - the catalytic core - and CF(0) - the membrane proton channel. CF(1) has five subunits: alpha(3), beta(3), gamma(1), delta(1), epsilon(1). CF(0) has three main subunits: a(1), b(2) and c(9-12). The alpha and beta chains form an alternating ring which encloses part of the gamma chain. CF(1) is attached to CF(0) by a central stalk formed by the gamma and epsilon chains, while a peripheral stalk is formed by the delta and b chains.

The protein resides in the cell membrane. The enzyme catalyses ATP + H2O + 4 H(+)(in) = ADP + phosphate + 5 H(+)(out). Functionally, produces ATP from ADP in the presence of a proton gradient across the membrane. The catalytic sites are hosted primarily by the beta subunits. The sequence is that of ATP synthase subunit beta from Brevibacillus brevis (strain 47 / JCM 6285 / NBRC 100599).